The sequence spans 58 residues: Alpha-conotoxin-like Pu1.6 (58 aa).

An N-terminal signal peptide occupies residues 1–17 (MFTVFLLVVLVTTVVFS). A propeptide spanning residues 18–35 (TSDHRPASNHENRRASKR) is cleaved from the precursor. 2 disulfides stabilise this stretch: Cys-44–Cys-50 and Cys-45–Cys-58. Residues 46-48 (TNP) are lacks the Ser-Xaa-Pro motif that is crucial for potent interaction with nAChR.

This sequence belongs to the conotoxin A superfamily. Expressed by the venom duct.

Its subcellular location is the secreted. Its function is as follows. Alpha-conotoxins act on postsynaptic membranes, they bind to the nicotinic acetylcholine receptors (nAChR) and thus inhibit them. Has possibly a distinct nAChR binding mode from other alpha-conotoxins, due to a different three residue motif (lacks the Ser-Xaa-Pro motif). The polypeptide is Alpha-conotoxin-like Pu1.6 (Conus pulicarius (Flea-bitten cone)).